Reading from the N-terminus, the 163-residue chain is 3-hydroxyacyl-[acyl-carrier-protein] dehydratase FabZ (163 aa).

The active site involves His58.

It belongs to the thioester dehydratase family. FabZ subfamily.

It localises to the cytoplasm. The catalysed reaction is a (3R)-hydroxyacyl-[ACP] = a (2E)-enoyl-[ACP] + H2O. Functionally, involved in unsaturated fatty acids biosynthesis. Catalyzes the dehydration of short chain beta-hydroxyacyl-ACPs and long chain saturated and unsaturated beta-hydroxyacyl-ACPs. The polypeptide is 3-hydroxyacyl-[acyl-carrier-protein] dehydratase FabZ (Francisella tularensis subsp. tularensis (strain FSC 198)).